The following is a 388-amino-acid chain: Probable E3 ubiquitin-protein ligase LOG2 (388 aa).

Residues 1 to 43 (MGNISSSGGEGRRRRRRNHTAAPPPPPPPPSSSLPPPPLPTEI) are disordered. Gly2 is lipidated: N-myristoyl glycine. The span at 22–40 (APPPPPPPPSSSLPPPPLP) shows a compositional bias: pro residues. The DAR2 domain stretch occupies residues 159 to 281 (FTFDATVSGR…GEIKIRVVKQ (123 aa)). The RING-type; atypical zinc finger occupies 319–358 (CVICLSEPRDTTVLPCRHMCMCSGCAKVLRFQTNRCPICR). A disordered region spans residues 368–388 (KVHGNNGSGNNTGQGETVEQE).

The protein belongs to the RING-type zinc finger family. LOG2 subfamily. As to quaternary structure, interacts with GDU1. Post-translationally, myristoylated (in vitro). In terms of tissue distribution, expressed in the vascular tissues in both phloem and xylem parenchyma cells.

The protein resides in the cell membrane. It carries out the reaction S-ubiquitinyl-[E2 ubiquitin-conjugating enzyme]-L-cysteine + [acceptor protein]-L-lysine = [E2 ubiquitin-conjugating enzyme]-L-cysteine + N(6)-ubiquitinyl-[acceptor protein]-L-lysine.. It participates in protein modification; protein ubiquitination. Its function is as follows. Acts as an E3 ubiquitin-protein ligase, or as part of E3 complex, which accepts ubiquitin from specific E2 ubiquitin-conjugating enzymes and then transfers it to substrates (in vitro). Required for GLUTAMINE DUMPER 1(GDU1)-induced amino acid secretion and for amino acid homeostasis. Ubiquitinates GDU1 (in vitro). The sequence is that of Probable E3 ubiquitin-protein ligase LOG2 (LOG2) from Arabidopsis thaliana (Mouse-ear cress).